The chain runs to 148 residues: Probable histone H2B.2 (148 aa).

Residues 1-32 (MAPKGEKKPAEKKPAEEKKSTVAEKAPAEKKP) show a composition bias toward basic and acidic residues. Residues 1–57 (MAPKGEKKPAEKKPAEEKKSTVAEKAPAEKKPKAGKKLPKEGGSAAGEKKKKRSKKS) are disordered. N6-acetyllysine is present on residues Lys-7, Lys-36, and Lys-37. Lys-144 participates in a covalent cross-link: Glycyl lysine isopeptide (Lys-Gly) (interchain with G-Cter in ubiquitin).

The protein belongs to the histone H2B family. The nucleosome is a histone octamer containing two molecules each of H2A, H2B, H3 and H4 assembled in one H3-H4 heterotetramer and two H2A-H2B heterodimers. The octamer wraps approximately 147 bp of DNA. Can be acetylated to form H2BK6ac, H2BK33ac and H2BK34ac. Post-translationally, monoubiquitinated to form H2BK143ub1; may give a specific tag for epigenetic transcriptional activation.

Its subcellular location is the nucleus. It is found in the chromosome. Core component of nucleosome. Nucleosomes wrap and compact DNA into chromatin, limiting DNA accessibility to the cellular machineries which require DNA as a template. Histones thereby play a central role in transcription regulation, DNA repair, DNA replication and chromosomal stability. DNA accessibility is regulated via a complex set of post-translational modifications of histones, also called histone code, and nucleosome remodeling. The sequence is that of Probable histone H2B.2 from Medicago truncatula (Barrel medic).